The chain runs to 500 residues: Protein shisa-6 (500 aa).

Residues 1–25 form the signal peptide; that stretch reads MALRRLLLLLLLSLESLDLLPSVHG. Residues 26–174 are Extracellular-facing; sequence ARGRAANRTL…NKYDPEKDKT (149 aa). Residues asparagine 32 and asparagine 59 are each glycosylated (N-linked (GlcNAc...) asparagine). Residues 52-73 are disordered; the sequence is ARGGRELNGTARAPGIPEAGSR. Residues 175–195 form a helical membrane-spanning segment; sequence NFTVYITCGVIAFVIVAGVFA. The Cytoplasmic segment spans residues 196–500; sequence KVSYDKAHRP…YTASKTEVTV (305 aa). Positions 240–255 are enriched in polar residues; sequence TSPKENTPVRSSSKNH. 2 disordered regions span residues 240–269 and 349–378; these read TSPK…PEKP and SQQK…DRGL. A phosphoserine mark is found at serine 391, serine 397, and serine 409. Residue threonine 433 is modified to Phosphothreonine. The interval 444–470 is disordered; sequence MHSHPSASNNSYATLGQSQTAAKRHAF. Residues 448 to 464 show a composition bias toward polar residues; sequence PSASNNSYATLGQSQTA. Threonine 477 is modified (phosphothreonine). A PDZ-binding motif is present at residues 497 to 500; that stretch reads EVTV.

It belongs to the shisa family. Component of the postsynaptic hippocampal AMPA-type glutamate receptor (AMPAR) complex, at least composed of pore forming AMPAR subunits GRIA1, GRIA2 and GRIA3 and AMPAR auxiliary proteins SHISA6 and SHISA7. Interacts (via PDZ-binding motif) with DLG4/PSD-95 (via PDZ domain); the interaction is direct. As to expression, expressed in the developing ventral mesencephalon.

Its subcellular location is the membrane. It localises to the postsynaptic density. Involved in maintenance of high-frequency synaptic transmission at hippocampal CA3-CA1 synapses. Regulates AMPA-type glutamate receptor (AMPAR) immobilization at postsynaptic density keeping the channels in an activated state in the presence of glutamate and preventing synaptic depression. May play a role in self-renewal and differentiation of spermatogonial stem cells by inhibiting canonical Wnt signaling pathway. The protein is Protein shisa-6 of Homo sapiens (Human).